We begin with the raw amino-acid sequence, 146 residues long: Coactosin (146 aa).

One can recognise an ADF-H domain in the interval 1–132 (MADVSSTELK…NEEELMTKVR (132 aa)).

Belongs to the actin-binding proteins ADF family. Coactosin subfamily. The N-terminus is blocked.

It is found in the cytoplasm. The protein localises to the cytoskeleton. Functionally, binds to F-actin in a calcium independent manner. Binds to the filaments along their length. In Dictyostelium discoideum (Social amoeba), this protein is Coactosin (coaA).